Here is a 708-residue protein sequence, read N- to C-terminus: Protein SUPPRESSOR OF MAX2 1A (708 aa).

The tract at residues 248 to 283 (QMASKPQEKAASPPGSPVRTDLVLGPKQTETTPEKT) is disordered. The EAR motif lies at 537 to 541 (FDLNE).

This sequence belongs to the ClpA/ClpB family.

Its function is as follows. Probable component of a transcriptional corepressor complex that acts downstream of MAX2 to negatively regulate karrikins/strigolactone responses. Involved in the (-)-germacrene D signaling pathway influencing plant fitness and occurring in the stigma in a KAI2IA-dependent manner. This Petunia hybrida (Petunia) protein is Protein SUPPRESSOR OF MAX2 1A.